Consider the following 213-residue polypeptide: Orotate phosphoribosyltransferase (213 aa).

Lys-26 is a 5-phospho-alpha-D-ribose 1-diphosphate binding site. An orotate-binding site is contributed by 34 to 35 (FF). 5-phospho-alpha-D-ribose 1-diphosphate-binding positions include 72–73 (YK), Arg-98, Lys-99, Lys-102, and 123–131 (DDVISAGTS). Residues Ser-127 and Arg-155 each contribute to the orotate site.

This sequence belongs to the purine/pyrimidine phosphoribosyltransferase family. PyrE subfamily. As to quaternary structure, homodimer. It depends on Mg(2+) as a cofactor.

It catalyses the reaction orotidine 5'-phosphate + diphosphate = orotate + 5-phospho-alpha-D-ribose 1-diphosphate. Its pathway is pyrimidine metabolism; UMP biosynthesis via de novo pathway; UMP from orotate: step 1/2. Functionally, catalyzes the transfer of a ribosyl phosphate group from 5-phosphoribose 1-diphosphate to orotate, leading to the formation of orotidine monophosphate (OMP). The sequence is that of Orotate phosphoribosyltransferase from Neisseria gonorrhoeae (strain ATCC 700825 / FA 1090).